A 208-amino-acid polypeptide reads, in one-letter code: Large ribosomal subunit protein uL4 (208 aa).

The interval 44 to 79 (QRQGTHKSKERSEISGSTRKIGRQKGGGGARRGDMN) is disordered.

This sequence belongs to the universal ribosomal protein uL4 family. In terms of assembly, part of the 50S ribosomal subunit.

One of the primary rRNA binding proteins, this protein initially binds near the 5'-end of the 23S rRNA. It is important during the early stages of 50S assembly. It makes multiple contacts with different domains of the 23S rRNA in the assembled 50S subunit and ribosome. In terms of biological role, forms part of the polypeptide exit tunnel. The protein is Large ribosomal subunit protein uL4 of Bacteroides fragilis (strain YCH46).